Reading from the N-terminus, the 418-residue chain is Acetylornithine aminotransferase (418 aa).

Pyridoxal 5'-phosphate-binding positions include 116–117 and F149; that span reads GA. R152 lines the N(2)-acetyl-L-ornithine pocket. 240-243 serves as a coordination point for pyridoxal 5'-phosphate; sequence DEVQ. N6-(pyridoxal phosphate)lysine is present on K269. S296 contacts N(2)-acetyl-L-ornithine. T297 contributes to the pyridoxal 5'-phosphate binding site.

Belongs to the class-III pyridoxal-phosphate-dependent aminotransferase family. ArgD subfamily. Homodimer. Pyridoxal 5'-phosphate serves as cofactor.

It localises to the cytoplasm. The enzyme catalyses N(2)-acetyl-L-ornithine + 2-oxoglutarate = N-acetyl-L-glutamate 5-semialdehyde + L-glutamate. The protein operates within amino-acid biosynthesis; L-arginine biosynthesis; N(2)-acetyl-L-ornithine from L-glutamate: step 4/4. The polypeptide is Acetylornithine aminotransferase (Prochlorococcus marinus (strain MIT 9313)).